An 81-amino-acid chain; its full sequence is Arminin 2a (81 aa).

Positions 1 to 18 (MKTVFAILFLAFIALTYA) are cleaved as a signal peptide. The propeptide occupies 19–57 (RSYEDVKEEIKNEVVKEILEDLEEESDELDDKSKEINDA). Ala-78 carries the alanine amide modification.

The protein belongs to the arminin family. As to expression, expressed in entodermal epithelium along the body column.

It localises to the secreted. The protein resides in the target cell membrane. Functionally, antimicrobial peptide with a broad-spectrum antimicrobial activity. Keeps its antibacterial activity under a wide range of salt concentrations that mimic physiological conditions of human blood, which is surprising, since Hydra is an obligate freshwater animal with nearly no salt tolerance. Does not affect red blood cells. The polypeptide is Arminin 2a (Hydra vulgaris (Hydra)).